Here is a 270-residue protein sequence, read N- to C-terminus: Imidazole glycerol phosphate synthase subunit HisF (270 aa).

Active-site residues include Asp-11 and Asp-135.

The protein belongs to the HisA/HisF family. In terms of assembly, heterodimer of HisH and HisF.

It localises to the cytoplasm. It catalyses the reaction 5-[(5-phospho-1-deoxy-D-ribulos-1-ylimino)methylamino]-1-(5-phospho-beta-D-ribosyl)imidazole-4-carboxamide + L-glutamine = D-erythro-1-(imidazol-4-yl)glycerol 3-phosphate + 5-amino-1-(5-phospho-beta-D-ribosyl)imidazole-4-carboxamide + L-glutamate + H(+). The protein operates within amino-acid biosynthesis; L-histidine biosynthesis; L-histidine from 5-phospho-alpha-D-ribose 1-diphosphate: step 5/9. IGPS catalyzes the conversion of PRFAR and glutamine to IGP, AICAR and glutamate. The HisF subunit catalyzes the cyclization activity that produces IGP and AICAR from PRFAR using the ammonia provided by the HisH subunit. The protein is Imidazole glycerol phosphate synthase subunit HisF of Haloquadratum walsbyi (strain DSM 16790 / HBSQ001).